Reading from the N-terminus, the 286-residue chain is Formamidopyrimidine-DNA glycosylase (286 aa).

Pro2 serves as the catalytic Schiff-base intermediate with DNA. The active-site Proton donor is Glu3. Lys61 serves as the catalytic Proton donor; for beta-elimination activity. DNA is bound by residues His96, Arg117, and Lys160. The FPG-type zinc finger occupies Asp246–Arg280. Catalysis depends on Arg270, which acts as the Proton donor; for delta-elimination activity.

This sequence belongs to the FPG family. Monomer. Zn(2+) serves as cofactor.

The catalysed reaction is Hydrolysis of DNA containing ring-opened 7-methylguanine residues, releasing 2,6-diamino-4-hydroxy-5-(N-methyl)formamidopyrimidine.. It carries out the reaction 2'-deoxyribonucleotide-(2'-deoxyribose 5'-phosphate)-2'-deoxyribonucleotide-DNA = a 3'-end 2'-deoxyribonucleotide-(2,3-dehydro-2,3-deoxyribose 5'-phosphate)-DNA + a 5'-end 5'-phospho-2'-deoxyribonucleoside-DNA + H(+). Its function is as follows. Involved in base excision repair of DNA damaged by oxidation or by mutagenic agents. Acts as a DNA glycosylase that recognizes and removes damaged bases. Has a preference for oxidized purines, such as 7,8-dihydro-8-oxoguanine (8-oxoG). Has AP (apurinic/apyrimidinic) lyase activity and introduces nicks in the DNA strand. Cleaves the DNA backbone by beta-delta elimination to generate a single-strand break at the site of the removed base with both 3'- and 5'-phosphates. The sequence is that of Formamidopyrimidine-DNA glycosylase from Streptomyces avermitilis (strain ATCC 31267 / DSM 46492 / JCM 5070 / NBRC 14893 / NCIMB 12804 / NRRL 8165 / MA-4680).